The chain runs to 67 residues: Large ribosomal subunit protein bL32 (67 aa).

Over residues 1 to 19 (MAVPKRKMSRSNTRARRSQ) the composition is skewed to basic residues. The tract at residues 1–21 (MAVPKRKMSRSNTRARRSQWK) is disordered.

It belongs to the bacterial ribosomal protein bL32 family.

This Clavibacter sepedonicus (Clavibacter michiganensis subsp. sepedonicus) protein is Large ribosomal subunit protein bL32.